Here is a 275-residue protein sequence, read N- to C-terminus: Probable CCR4-associated factor 1 homolog 7 (275 aa).

Residues Asp40, Glu42, Asp167, and Asp236 each contribute to the a divalent metal cation site.

The protein belongs to the CAF1 family. Component of the CCR4-NOT complex, at least composed of CRR4 and CAF1 proteins. It depends on a divalent metal cation as a cofactor.

The protein localises to the nucleus. Its subcellular location is the cytoplasm. The catalysed reaction is Exonucleolytic cleavage of poly(A) to 5'-AMP.. Functionally, ubiquitous transcription factor required for a diverse set of processes. It is a component of the CCR4 complex involved in the control of gene expression. The protein is Probable CCR4-associated factor 1 homolog 7 (CAF1-7) of Arabidopsis thaliana (Mouse-ear cress).